The chain runs to 351 residues: Heat-inducible transcription repressor HrcA (351 aa).

It belongs to the HrcA family.

Its function is as follows. Negative regulator of class I heat shock genes (grpE-dnaK-dnaJ and groELS operons). Prevents heat-shock induction of these operons. The chain is Heat-inducible transcription repressor HrcA from Acetivibrio thermocellus (strain ATCC 27405 / DSM 1237 / JCM 9322 / NBRC 103400 / NCIMB 10682 / NRRL B-4536 / VPI 7372) (Clostridium thermocellum).